The following is a 214-amino-acid chain: Probable transaldolase (214 aa).

Lys-83 (schiff-base intermediate with substrate) is an active-site residue.

This sequence belongs to the transaldolase family. Type 3B subfamily.

It is found in the cytoplasm. The enzyme catalyses D-sedoheptulose 7-phosphate + D-glyceraldehyde 3-phosphate = D-erythrose 4-phosphate + beta-D-fructose 6-phosphate. It functions in the pathway carbohydrate degradation; pentose phosphate pathway; D-glyceraldehyde 3-phosphate and beta-D-fructose 6-phosphate from D-ribose 5-phosphate and D-xylulose 5-phosphate (non-oxidative stage): step 2/3. Its function is as follows. Transaldolase is important for the balance of metabolites in the pentose-phosphate pathway. The protein is Probable transaldolase of Carboxydothermus hydrogenoformans (strain ATCC BAA-161 / DSM 6008 / Z-2901).